A 311-amino-acid chain; its full sequence is Energy-coupling factor transporter ATP-binding protein EcfA (311 aa).

Positions 2–237 constitute an ABC transporter domain; that stretch reads IELRDLSYSY…AELIRRASLR (236 aa). Residue 35–42 coordinates ATP; sequence GPNGAGKS.

The protein belongs to the ABC transporter superfamily. Energy-coupling factor EcfA family. As to quaternary structure, forms a stable energy-coupling factor (ECF) transporter complex composed of 2 membrane-embedded substrate-binding proteins (S component), 2 ATP-binding proteins (A component) and 2 transmembrane proteins (T component).

It is found in the cell membrane. In terms of biological role, ATP-binding (A) component of a common energy-coupling factor (ECF) ABC-transporter complex. Unlike classic ABC transporters this ECF transporter provides the energy necessary to transport a number of different substrates. The protein is Energy-coupling factor transporter ATP-binding protein EcfA of Methanothermobacter thermautotrophicus (strain ATCC 29096 / DSM 1053 / JCM 10044 / NBRC 100330 / Delta H) (Methanobacterium thermoautotrophicum).